We begin with the raw amino-acid sequence, 208 residues long: Probable GTP-binding protein EngB (208 aa).

In terms of domain architecture, EngB-type G spans 23 to 205; the sequence is LTSEMVVLGR…RQTLLKHLLT (183 aa). GTP is bound by residues 31 to 38, 57 to 61, 84 to 87, 154 to 157, and 182 to 184; these read GRSNVGKS, GKTRL, DLPG, TKFD, and FNA. Mg(2+) contacts are provided by S38 and T59.

Belongs to the TRAFAC class TrmE-Era-EngA-EngB-Septin-like GTPase superfamily. EngB GTPase family. Mg(2+) serves as cofactor.

Functionally, necessary for normal cell division and for the maintenance of normal septation. The chain is Probable GTP-binding protein EngB from Helicobacter pylori (strain ATCC 700392 / 26695) (Campylobacter pylori).